The primary structure comprises 282 residues: MPAETVRKEVALEYCRRVNAGELEGVLQLFAPDALLVDPLGTEPVVGRAALAARLAPALRGAVHEEPGRPYAAHDGTSVVLPATVTVGAPGAPPQRRGRTRVMGVIEVGEDGLIREMRVMWGVTDSSWTARPAPDEERRKELAREHCLRINDGDVDGLLKLYSPRIRFEDPVGSWTRTGLEALRAHATMAVGSNVRETAGLTVAGQDGRHAAVTVSATMDYLPSGPLLARHHLMTLPAPADPHRALIGIEYVMVIGVDADGLIDEMRAYWGATDVSLLDPAA.

The lsd19A stretch occupies residues 1–133 (MPAETVRKEV…TDSSWTARPA (133 aa)). Tyrosine 14 lines the substrate pocket. Aspartate 38 functions as the Proton acceptor; for 5-exo epoxide-opening cyclization activity in the catalytic mechanism. Residues glutamate 65 and histidine 146 each contribute to the substrate site. A lsd19B region spans residues 134–282 (PDEERRKELA…TDVSLLDPAA (149 aa)). Residue aspartate 170 is the Proton acceptor; for 6-endo epoxide-opening cyclization activity of the active site. Residues arginine 177, glutamate 197, and tyrosine 251 each coordinate substrate.

Epoxide hydrolase responsible for the double epoxide-opening cyclization of bisepoxyprelasalocid A to form lasalocid A, a polyether antibiotic. In vitro, accepts various substrate analogs differing in the left segment of lasalocid and epoxide stereochemistry to afford products with excellent regioselectivity. The chain is Epoxide hydrolase LasB (lsd19) from Streptomyces lasalocidi (Streptomyces lasaliensis).